The primary structure comprises 146 residues: Hut operon positive regulatory protein (146 aa).

Belongs to the HutP family. Homohexamer.

In terms of biological role, antiterminator that binds to cis-acting regulatory sequences on the mRNA in the presence of histidine, thereby suppressing transcription termination and activating the hut operon for histidine utilization. The protein is Hut operon positive regulatory protein of Bacillus mycoides (strain KBAB4) (Bacillus weihenstephanensis).